A 166-amino-acid polypeptide reads, in one-letter code: MANIEKQAGELQEKLIAVNRVSKTVKGGRIMSFTALTVVGDGNGRVGFGYGKAREVPAAIQKAMEKARRNMINVALNEGTLQHPIKGAHTGSRVFMQPASEGTGIIAGGAMRAVLEVAGVRNVLSKAYGSTNPINVVRATIDALANMKSPEMVAAKRGKTVDEILG.

Residues 11–74 (LQEKLIAVNR…EKARRNMINV (64 aa)) form the S5 DRBM domain.

The protein belongs to the universal ribosomal protein uS5 family. Part of the 30S ribosomal subunit. Contacts proteins S4 and S8.

In terms of biological role, with S4 and S12 plays an important role in translational accuracy. Functionally, located at the back of the 30S subunit body where it stabilizes the conformation of the head with respect to the body. This Pasteurella multocida (strain Pm70) protein is Small ribosomal subunit protein uS5.